The sequence spans 120 residues: Large ribosomal subunit protein bL17 (120 aa).

This sequence belongs to the bacterial ribosomal protein bL17 family. In terms of assembly, part of the 50S ribosomal subunit. Contacts protein L32.

The polypeptide is Large ribosomal subunit protein bL17 (Mesomycoplasma hyopneumoniae (strain 7448) (Mycoplasma hyopneumoniae)).